A 155-amino-acid polypeptide reads, in one-letter code: F-box only protein 48 (155 aa).

A disordered region spans residues 1 to 27 (MHKNSKRNNNLRVSHTEANSVDAEKEK). A compositionally biased stretch (polar residues) spans 7–19 (RNNNLRVSHTEAN). The F-box domain occupies 32–79 (NNFFELLPAEITFKIFSQLDIRSLCRASLTCRSWNDTIRNSDSLWKPH).

The protein is F-box only protein 48 (FBXO48) of Homo sapiens (Human).